A 129-amino-acid polypeptide reads, in one-letter code: D-ribose pyranase (129 aa).

The active-site Proton donor is histidine 20. Substrate contacts are provided by residues aspartate 28, histidine 96, and 118-120 (YAN).

This sequence belongs to the RbsD / FucU family. RbsD subfamily. As to quaternary structure, homodecamer.

The protein resides in the cytoplasm. It catalyses the reaction beta-D-ribopyranose = beta-D-ribofuranose. Its pathway is carbohydrate metabolism; D-ribose degradation; D-ribose 5-phosphate from beta-D-ribopyranose: step 1/2. Functionally, catalyzes the interconversion of beta-pyran and beta-furan forms of D-ribose. The polypeptide is D-ribose pyranase (Staphylococcus saprophyticus subsp. saprophyticus (strain ATCC 15305 / DSM 20229 / NCIMB 8711 / NCTC 7292 / S-41)).